The chain runs to 235 residues: Phosphoribosylaminoimidazole-succinocarboxamide synthase (235 aa).

It belongs to the SAICAR synthetase family.

The enzyme catalyses 5-amino-1-(5-phospho-D-ribosyl)imidazole-4-carboxylate + L-aspartate + ATP = (2S)-2-[5-amino-1-(5-phospho-beta-D-ribosyl)imidazole-4-carboxamido]succinate + ADP + phosphate + 2 H(+). The protein operates within purine metabolism; IMP biosynthesis via de novo pathway; 5-amino-1-(5-phospho-D-ribosyl)imidazole-4-carboxamide from 5-amino-1-(5-phospho-D-ribosyl)imidazole-4-carboxylate: step 1/2. This Clostridium perfringens (strain SM101 / Type A) protein is Phosphoribosylaminoimidazole-succinocarboxamide synthase.